Here is a 226-residue protein sequence, read N- to C-terminus: 1-hydroxy-2-glutathionyl-2-methyl-3-butene dehydrogenase (226 aa).

It belongs to the short-chain dehydrogenases/reductases (SDR) family.

The enzyme catalyses 2-glutathionyl-2-methylbut-3-en-1-ol + 2 NAD(+) + H2O = 2-glutathionyl-2-methylbut-3-enoate + 2 NADH + 3 H(+). It catalyses the reaction 2-glutathionyl-2-methylbut-3-en-1-ol + NAD(+) = 2-glutathionyl-2-methylbut-3-enal + NADH + H(+). The catalysed reaction is 2-glutathionyl-2-methylbut-3-enal + NAD(+) + H2O = 2-glutathionyl-2-methylbut-3-enoate + NADH + 2 H(+). Its function is as follows. Involved in isoprene degradation. Catalyzes the two-step NAD(+)-dependent oxidation of 2-glutathionyl-2-methylbut-3-en-1-ol (HGMB) to 2-glutathionyl-2-methylbut-3-enoate (GMBA). This chain is 1-hydroxy-2-glutathionyl-2-methyl-3-butene dehydrogenase, found in Rhodococcus sp. (strain AD45).